The sequence spans 337 residues: Anthranilate phosphoribosyltransferase (337 aa).

5-phospho-alpha-D-ribose 1-diphosphate contacts are provided by residues Gly80, Gly83–Asp84, Thr88, Asn90–Thr93, Lys108–Ser116, and Ser120. Residue Gly80 participates in anthranilate binding. Ser92 is a Mg(2+) binding site. Asn111 lines the anthranilate pocket. Arg166 contacts anthranilate. Residues Asp224 and Glu225 each coordinate Mg(2+).

It belongs to the anthranilate phosphoribosyltransferase family. As to quaternary structure, homodimer. Mg(2+) serves as cofactor.

It catalyses the reaction N-(5-phospho-beta-D-ribosyl)anthranilate + diphosphate = 5-phospho-alpha-D-ribose 1-diphosphate + anthranilate. It participates in amino-acid biosynthesis; L-tryptophan biosynthesis; L-tryptophan from chorismate: step 2/5. Its function is as follows. Catalyzes the transfer of the phosphoribosyl group of 5-phosphorylribose-1-pyrophosphate (PRPP) to anthranilate to yield N-(5'-phosphoribosyl)-anthranilate (PRA). This chain is Anthranilate phosphoribosyltransferase, found in Anaeromyxobacter dehalogenans (strain 2CP-C).